A 174-amino-acid polypeptide reads, in one-letter code: MALNLMAKKAVVAQVNLLARVSVSIGVAEYCGLTVEQMTNLRSSAIDADVVLRVVKNSLAKRALVSTKCECVLPVLSGPVILGFSQQDLGAVARVFKNFIKENKDLVVKGLGVSGEFVESNQLKRIADLPTRDQAISIIMALMLAPVEKLARTLIEVPMKVTRVVEAVCDQKKS.

This sequence belongs to the universal ribosomal protein uL10 family. As to quaternary structure, part of the ribosomal stalk of the 50S ribosomal subunit. The N-terminus interacts with L11 and the large rRNA to form the base of the stalk. The C-terminus forms an elongated spine to which L12 dimers bind in a sequential fashion forming a multimeric L10(L12)X complex.

Forms part of the ribosomal stalk, playing a central role in the interaction of the ribosome with GTP-bound translation factors. The polypeptide is Large ribosomal subunit protein uL10 (Vesicomyosocius okutanii subsp. Calyptogena okutanii (strain HA)).